Here is a 401-residue protein sequence, read N- to C-terminus: L-rhamnonate dehydratase (401 aa).

2 residues coordinate substrate: histidine 29 and arginine 55. Aspartate 222, glutamate 248, and glutamate 276 together coordinate Mg(2+). The active-site Proton acceptor is histidine 325. Glutamate 345 contacts substrate.

Belongs to the mandelate racemase/muconate lactonizing enzyme family. RhamD subfamily. Homooctamer; tetramer of dimers. Requires Mg(2+) as cofactor.

The catalysed reaction is L-rhamnonate = 2-dehydro-3-deoxy-L-rhamnonate + H2O. In terms of biological role, catalyzes the dehydration of L-rhamnonate to 2-keto-3-deoxy-L-rhamnonate (KDR). The polypeptide is L-rhamnonate dehydratase (Klebsiella pneumoniae (strain 342)).